Here is a 201-residue protein sequence, read N- to C-terminus: Ribosome maturation factor RimM (201 aa).

The region spanning glutamate 94 to leucine 168 is the PRC barrel domain. Residues proline 164 to serine 201 form a disordered region. Residues glycine 180–glycine 194 show a composition bias toward acidic residues.

Belongs to the RimM family. Binds ribosomal protein uS19.

The protein resides in the cytoplasm. An accessory protein needed during the final step in the assembly of 30S ribosomal subunit, possibly for assembly of the head region. Essential for efficient processing of 16S rRNA. May be needed both before and after RbfA during the maturation of 16S rRNA. It has affinity for free ribosomal 30S subunits but not for 70S ribosomes. This chain is Ribosome maturation factor RimM, found in Rhodospirillum rubrum (strain ATCC 11170 / ATH 1.1.1 / DSM 467 / LMG 4362 / NCIMB 8255 / S1).